A 177-amino-acid polypeptide reads, in one-letter code: Sec-independent protein translocase protein TatB (177 aa).

The helical transmembrane segment at 1–21 (MFDFAWSEIAVIGVVALVVIG) threads the bilayer. Residues 136-146 (REKTVSSETAR) show a composition bias toward basic and acidic residues. Positions 136–177 (REKTVSSETARRAATAPAFIPPGEAFRSARRAPAFIPPADQG) are disordered.

Belongs to the TatB family. The Tat system comprises two distinct complexes: a TatABC complex, containing multiple copies of TatA, TatB and TatC subunits, and a separate TatA complex, containing only TatA subunits. Substrates initially bind to the TatABC complex, which probably triggers association of the separate TatA complex to form the active translocon.

The protein resides in the cell inner membrane. Part of the twin-arginine translocation (Tat) system that transports large folded proteins containing a characteristic twin-arginine motif in their signal peptide across membranes. Together with TatC, TatB is part of a receptor directly interacting with Tat signal peptides. TatB may form an oligomeric binding site that transiently accommodates folded Tat precursor proteins before their translocation. This Granulibacter bethesdensis (strain ATCC BAA-1260 / CGDNIH1) protein is Sec-independent protein translocase protein TatB.